The sequence spans 748 residues: Wings apart-like protein homolog 1 (748 aa).

2 disordered regions span residues 23-199 (TLAQ…VYAT) and 614-644 (EGGC…RLDR). The segment covering 35 to 64 (PSVRSSDSPDVPDTPDVPVNQLSSPPLSLP) has biased composition (low complexity). 2 stretches are compositionally biased toward polar residues: residues 68–79 (SEGNAETLQNLS) and 87–96 (LSQSSTSSLN). Over residues 172-182 (ISSSSNRYSSR) the composition is skewed to low complexity. A WAPL domain is found at 205–723 (KPLASGYGSR…KRLYDFTKAT (519 aa)). The segment covering 616 to 633 (GCGDEEEEEEGGDESSDE) has biased composition (acidic residues). The segment covering 634–644 (DGVRKDGRLDR) has biased composition (basic and acidic residues).

This sequence belongs to the WAPL family.

Its subcellular location is the nucleus. In terms of biological role, regulator of meiotic chromosome structure and function, playing a role in sister chromatid cohesion, possibly via antagonizing the coh-3/-4 association with axial elements in nuclei during late prophase, cohesin association with chromatin, DNA double strand break repair and polar body positioning following meiotic divisions during oogenesis. Regulates the morphogenesis and temporal assembly of axial elements to control the organization of meiotic chromosomes in pachytene nuclei and is also involved in meiotic chromosomal remodeling in late pachytene nuclei. Required for the removal of the cohesin component scc-1 from mitotic chromosomes. This is Wings apart-like protein homolog 1 from Caenorhabditis elegans.